The chain runs to 288 residues: Phosphatidylserine decarboxylase proenzyme (288 aa).

Active-site charge relay system; for autoendoproteolytic cleavage activity residues include aspartate 89, histidine 146, and serine 252. Serine 252 functions as the Schiff-base intermediate with substrate; via pyruvic acid; for decarboxylase activity in the catalytic mechanism. At serine 252 the chain carries Pyruvic acid (Ser); by autocatalysis.

Belongs to the phosphatidylserine decarboxylase family. PSD-B subfamily. Prokaryotic type I sub-subfamily. As to quaternary structure, heterodimer of a large membrane-associated beta subunit and a small pyruvoyl-containing alpha subunit. Requires pyruvate as cofactor. Post-translationally, is synthesized initially as an inactive proenzyme. Formation of the active enzyme involves a self-maturation process in which the active site pyruvoyl group is generated from an internal serine residue via an autocatalytic post-translational modification. Two non-identical subunits are generated from the proenzyme in this reaction, and the pyruvate is formed at the N-terminus of the alpha chain, which is derived from the carboxyl end of the proenzyme. The autoendoproteolytic cleavage occurs by a canonical serine protease mechanism, in which the side chain hydroxyl group of the serine supplies its oxygen atom to form the C-terminus of the beta chain, while the remainder of the serine residue undergoes an oxidative deamination to produce ammonia and the pyruvoyl prosthetic group on the alpha chain. During this reaction, the Ser that is part of the protease active site of the proenzyme becomes the pyruvoyl prosthetic group, which constitutes an essential element of the active site of the mature decarboxylase.

The protein resides in the cell membrane. The catalysed reaction is a 1,2-diacyl-sn-glycero-3-phospho-L-serine + H(+) = a 1,2-diacyl-sn-glycero-3-phosphoethanolamine + CO2. It functions in the pathway phospholipid metabolism; phosphatidylethanolamine biosynthesis; phosphatidylethanolamine from CDP-diacylglycerol: step 2/2. Its function is as follows. Catalyzes the formation of phosphatidylethanolamine (PtdEtn) from phosphatidylserine (PtdSer). In Shewanella frigidimarina (strain NCIMB 400), this protein is Phosphatidylserine decarboxylase proenzyme.